Consider the following 549-residue polypeptide: MFS-type transporter TwmF (549 aa).

4 helical membrane-spanning segments follow: residues 29–49 (IVIG…VLTI), 63–83 (NFIW…PLFG), 99–119 (VAIF…AMLI), and 126–146 (GVGS…LVPL). N-linked (GlcNAc...) asparagine glycosylation occurs at asparagine 151. 10 consecutive transmembrane segments (helical) span residues 155–175 (ILMS…GAIV), 182–202 (WVFY…FIFL), 221–241 (LVGN…LSYA), 249–269 (SWHT…FAGL), 291–311 (IILA…LFFL), 328–348 (VALL…AIAL), 355–375 (KPVH…FTLF), 390–410 (IVAF…QAFI), 421–441 (AWYF…AAIF), and 502–522 (VSIA…DVGL).

This sequence belongs to the major facilitator superfamily.

The protein resides in the membrane. In terms of biological role, MFS efflux transporter; part of the gene cluster that mediates the biosynthesis of wortmanamides A and B, reduced long-chain polyketides amidated with a specific omega-amino acid, 5-aminopentanoic acid (5PA). In Talaromyces wortmannii (Penicillium wortmannii), this protein is MFS-type transporter TwmF.